Consider the following 226-residue polypeptide: Pre-mRNA-splicing factor SPF27 (226 aa).

An N-acetylalanine modification is found at alanine 2. At serine 94 the chain carries Phosphoserine. A coiled-coil region spans residues 139–223; it reads YNENLVHMIE…HGEANKENIR (85 aa).

This sequence belongs to the SPF27 family. As to quaternary structure, component of the pre-catalytic and catalytic spliceosome complexes. Component of the postcatalytic spliceosome P complex. Component of the PRP19-CDC5L splicing complex composed of a core complex comprising a homotetramer of PRPF19, CDC5L, PLRG1 and BCAS2, and at least three less stably associated proteins CTNNBL1, CWC15 and HSPA8. Interacts directly in the complex with PRPF19, CDC5L and PLRG1.

The protein localises to the nucleus. The protein resides in the nucleolus. In terms of biological role, required for pre-mRNA splicing as component of the activated spliceosome. Component of the PRP19-CDC5L complex that forms an integral part of the spliceosome and is required for activating pre-mRNA splicing. May have a scaffolding role in the spliceosome assembly as it contacts all other components of the core complex. The PRP19-CDC5L complex may also play a role in the response to DNA damage (DDR). This is Pre-mRNA-splicing factor SPF27 (BCAS2) from Pongo abelii (Sumatran orangutan).